The following is a 278-amino-acid chain: Biotin synthase (278 aa).

One can recognise a Radical SAM core domain in the interval 1–227 (MQIMLCAISN…NAHIMVAGGR (227 aa)). 3 residues coordinate [4Fe-4S] cluster: C16, C20, and C23. [2Fe-2S] cluster contacts are provided by C60, C95, and C153.

The protein belongs to the radical SAM superfamily. Biotin synthase family. In terms of assembly, homodimer. It depends on [4Fe-4S] cluster as a cofactor. Requires [2Fe-2S] cluster as cofactor.

It catalyses the reaction (4R,5S)-dethiobiotin + (sulfur carrier)-SH + 2 reduced [2Fe-2S]-[ferredoxin] + 2 S-adenosyl-L-methionine = (sulfur carrier)-H + biotin + 2 5'-deoxyadenosine + 2 L-methionine + 2 oxidized [2Fe-2S]-[ferredoxin]. It functions in the pathway cofactor biosynthesis; biotin biosynthesis; biotin from 7,8-diaminononanoate: step 2/2. Catalyzes the conversion of dethiobiotin (DTB) to biotin by the insertion of a sulfur atom into dethiobiotin via a radical-based mechanism. This Campylobacter lari (strain RM2100 / D67 / ATCC BAA-1060) protein is Biotin synthase.